A 439-amino-acid polypeptide reads, in one-letter code: Xaa-Pro dipeptidase (439 aa).

The Mn(2+) site is built by aspartate 244, aspartate 255, histidine 335, glutamate 380, and glutamate 419.

Belongs to the peptidase M24B family. Bacterial-type prolidase subfamily. The cofactor is Mn(2+).

It carries out the reaction Xaa-L-Pro dipeptide + H2O = an L-alpha-amino acid + L-proline. Functionally, splits dipeptides with a prolyl residue in the C-terminal position. This chain is Xaa-Pro dipeptidase, found in Shewanella amazonensis (strain ATCC BAA-1098 / SB2B).